A 247-amino-acid polypeptide reads, in one-letter code: Pyridoxine 5'-phosphate synthase (247 aa).

A 3-amino-2-oxopropyl phosphate-binding site is contributed by Asn12. A 1-deoxy-D-xylulose 5-phosphate-binding site is contributed by 14–15; sequence DH. 3-amino-2-oxopropyl phosphate is bound at residue Arg23. His48 serves as the catalytic Proton acceptor. Residues Arg50 and His55 each contribute to the 1-deoxy-D-xylulose 5-phosphate site. The active-site Proton acceptor is Glu75. Thr105 contacts 1-deoxy-D-xylulose 5-phosphate. The active-site Proton donor is His196. 3-amino-2-oxopropyl phosphate-binding positions include Gly197 and 218–219; that span reads GH.

The protein belongs to the PNP synthase family. Homooctamer; tetramer of dimers.

It is found in the cytoplasm. The enzyme catalyses 3-amino-2-oxopropyl phosphate + 1-deoxy-D-xylulose 5-phosphate = pyridoxine 5'-phosphate + phosphate + 2 H2O + H(+). It participates in cofactor biosynthesis; pyridoxine 5'-phosphate biosynthesis; pyridoxine 5'-phosphate from D-erythrose 4-phosphate: step 5/5. Functionally, catalyzes the complicated ring closure reaction between the two acyclic compounds 1-deoxy-D-xylulose-5-phosphate (DXP) and 3-amino-2-oxopropyl phosphate (1-amino-acetone-3-phosphate or AAP) to form pyridoxine 5'-phosphate (PNP) and inorganic phosphate. The protein is Pyridoxine 5'-phosphate synthase of Pseudomonas fluorescens (strain SBW25).